The primary structure comprises 212 residues: 2-phospho-L-lactate guanylyltransferase (212 aa).

It belongs to the CofC family. Homodimer.

It catalyses the reaction (2S)-2-phospholactate + GTP + H(+) = (2S)-lactyl-2-diphospho-5'-guanosine + diphosphate. Its pathway is cofactor biosynthesis; coenzyme F420 biosynthesis. Its function is as follows. Guanylyltransferase that catalyzes the activation of (2S)-2-phospholactate (2-PL) as (2S)-lactyl-2-diphospho-5'-guanosine, via the condensation of 2-PL with GTP. It is involved in the biosynthesis of coenzyme F420, a hydride carrier cofactor. In Methanocorpusculum labreanum (strain ATCC 43576 / DSM 4855 / Z), this protein is 2-phospho-L-lactate guanylyltransferase.